The chain runs to 1227 residues: Methionine synthase (1227 aa).

The region spanning 2–325 (SSKVEQLRAQ…QHIAAMSRAV (324 aa)) is the Hcy-binding domain. Zn(2+) is bound by residues cysteine 247, cysteine 310, and cysteine 311. One can recognise a Pterin-binding domain in the interval 356–617 (FVNVGERTNV…LPAELRDAVE (262 aa)). A B12-binding N-terminal domain is found at 650–744 (QQAEWRSWEV…FIEASKEQGK (95 aa)). Methylcob(III)alamin is bound by residues glutamate 694, 756–760 (GDVHD), histidine 759, serine 804, threonine 808, and alanine 860. Positions 746–881 (NGKMVIATVK…SDTQRDDFVA (136 aa)) constitute a B12-binding domain. An AdoMet activation domain is found at 897–1227 (KKPRTPPVTL…LAPNLGYDAD (331 aa)). S-adenosyl-L-methionine-binding positions include aspartate 946, arginine 1134, and 1189–1190 (YY).

The protein belongs to the vitamin-B12 dependent methionine synthase family. The cofactor is methylcob(III)alamin. Zn(2+) is required as a cofactor.

The catalysed reaction is (6S)-5-methyl-5,6,7,8-tetrahydrofolate + L-homocysteine = (6S)-5,6,7,8-tetrahydrofolate + L-methionine. Its pathway is amino-acid biosynthesis; L-methionine biosynthesis via de novo pathway; L-methionine from L-homocysteine (MetH route): step 1/1. Functionally, catalyzes the transfer of a methyl group from methyl-cobalamin to homocysteine, yielding enzyme-bound cob(I)alamin and methionine. Subsequently, remethylates the cofactor using methyltetrahydrofolate. The protein is Methionine synthase (metH) of Escherichia coli (strain K12).